Reading from the N-terminus, the 407-residue chain is Substance-P receptor (407 aa).

Residues 1 to 31 are Extracellular-facing; sequence MDNVLPVDSDLSPNISTNTSEPNQFVQPAWQ. Residues Asn-14 and Asn-18 are each glycosylated (N-linked (GlcNAc...) asparagine). Residues 32-54 form a helical membrane-spanning segment; the sequence is IVLWAAAYTVIVVTSVVGNVVVM. Over 55-64 the chain is Cytoplasmic; the sequence is WIILAHKRMR. The helical transmembrane segment at 65-86 threads the bilayer; the sequence is TVTNYFLVNLAFAEASMAAFNT. The Extracellular portion of the chain corresponds to 87–106; sequence VVNFTYAVHNEWYYGLFYCK. An intrachain disulfide couples Cys-105 to Cys-180. The chain crosses the membrane as a helical span at residues 107–128; sequence FHNFFPIAAVFASIYSMTAVAF. The Cytoplasmic portion of the chain corresponds to 129 to 148; it reads DRYMAIIHPLQPRLSATATK. A helical membrane pass occupies residues 149 to 169; sequence VVICVIWVLALLLAFPQGYYS. At 170-194 the chain is on the extracellular side; that stretch reads TTETMPSRVVCMIEWPEHPNKIYEK. A helical transmembrane segment spans residues 195 to 219; that stretch reads VYHICVTVLIYFLPLLVIGYAYTVV. Residue His-197 coordinates CP-96345. Residues 220-248 are Cytoplasmic-facing; that stretch reads GITLWASEIPGDSSDRYHEQVSAKRKVVK. The helical transmembrane segment at 249–270 threads the bilayer; that stretch reads MMIVVVCTFAICWLPFHIFFLL. Over 271-283 the chain is Extracellular; that stretch reads PYINPDLYLKKFI. Residues 284 to 308 traverse the membrane as a helical segment; sequence QQVYLAIMWLAMSSTMYNPIIYCCL. At 309 to 407 the chain is on the cytoplasmic side; that stretch reads NDRFRLGFKH…SFSFSSNVLS (99 aa). Residue Cys-322 is the site of S-palmitoyl cysteine attachment. Residues 364 to 407 are disordered; sequence AHEEEPEDGPKATPSSLDLTSNCSSRSDSKTMTESFSFSSNVLS. Residues 376 to 407 are compositionally biased toward polar residues; sequence TPSSLDLTSNCSSRSDSKTMTESFSFSSNVLS.

Belongs to the G-protein coupled receptor 1 family. As to quaternary structure, interacts with ARRB1.

Its subcellular location is the cell membrane. Its function is as follows. This is a receptor for the tachykinin neuropeptide substance P. It is probably associated with G proteins that activate a phosphatidylinositol-calcium second messenger system. The rank order of affinity of this receptor to tachykinins is: substance P &gt; substance K &gt; neuromedin-K. The polypeptide is Substance-P receptor (TACR1) (Homo sapiens (Human)).